A 552-amino-acid polypeptide reads, in one-letter code: CTP synthase (552 aa).

Positions 1 to 267 (MAKFIFVTGG…AEQTLKLLRM (267 aa)) are amidoligase domain. Residue serine 13 coordinates CTP. Serine 13 is a UTP binding site. Residues 14-19 (SIGKGI) and aspartate 71 contribute to the ATP site. The Mg(2+) site is built by aspartate 71 and glutamate 141. CTP is bound by residues 148 to 150 (DIE), 188 to 193 (KTKPTQ), and lysine 224. Residues 188–193 (KTKPTQ) and lysine 224 each bind UTP. In terms of domain architecture, Glutamine amidotransferase type-1 spans 292–534 (DIAIVGKYVQ…IQAAGNHKSQ (243 aa)). Glycine 354 is an L-glutamine binding site. Residue cysteine 381 is the Nucleophile; for glutamine hydrolysis of the active site. L-glutamine contacts are provided by residues 382-385 (LGMQ), glutamate 405, and arginine 462. Catalysis depends on residues histidine 507 and glutamate 509. The disordered stretch occupies residues 533–552 (SQPISDELDNQSTEMSISLS).

Belongs to the CTP synthase family. As to quaternary structure, homotetramer.

The catalysed reaction is UTP + L-glutamine + ATP + H2O = CTP + L-glutamate + ADP + phosphate + 2 H(+). The enzyme catalyses L-glutamine + H2O = L-glutamate + NH4(+). It carries out the reaction UTP + NH4(+) + ATP = CTP + ADP + phosphate + 2 H(+). It functions in the pathway pyrimidine metabolism; CTP biosynthesis via de novo pathway; CTP from UDP: step 2/2. With respect to regulation, allosterically activated by GTP, when glutamine is the substrate; GTP has no effect on the reaction when ammonia is the substrate. The allosteric effector GTP functions by stabilizing the protein conformation that binds the tetrahedral intermediate(s) formed during glutamine hydrolysis. Inhibited by the product CTP, via allosteric rather than competitive inhibition. Functionally, catalyzes the ATP-dependent amination of UTP to CTP with either L-glutamine or ammonia as the source of nitrogen. Regulates intracellular CTP levels through interactions with the four ribonucleotide triphosphates. The chain is CTP synthase from Picosynechococcus sp. (strain ATCC 27264 / PCC 7002 / PR-6) (Agmenellum quadruplicatum).